The sequence spans 190 residues: Sec-independent protein translocase protein TatB (190 aa).

Residues 2 to 22 traverse the membrane as a helical segment; sequence LPDIGGTELLVIAAVALIVVG. The disordered stretch occupies residues 130–190; it reads IVSKPARKPP…KASTNSDITS (61 aa). A compositionally biased stretch (basic residues) spans 134 to 144; that stretch reads PARKPPAKKAA. The span at 145 to 163 shows a compositional bias: low complexity; it reads AKPAAKAELVSKPKASAKA.

Belongs to the TatB family. As to quaternary structure, the Tat system comprises two distinct complexes: a TatABC complex, containing multiple copies of TatA, TatB and TatC subunits, and a separate TatA complex, containing only TatA subunits. Substrates initially bind to the TatABC complex, which probably triggers association of the separate TatA complex to form the active translocon.

The protein resides in the cell inner membrane. Functionally, part of the twin-arginine translocation (Tat) system that transports large folded proteins containing a characteristic twin-arginine motif in their signal peptide across membranes. Together with TatC, TatB is part of a receptor directly interacting with Tat signal peptides. TatB may form an oligomeric binding site that transiently accommodates folded Tat precursor proteins before their translocation. The protein is Sec-independent protein translocase protein TatB of Caulobacter sp. (strain K31).